The chain runs to 679 residues: MLTWETPVMLASNTASTKKLAFITTFLIIVLCPVTMVMSQPQADVLPLPASDADCLLRFKDTLVNASFISSWDPSISPCKRNSENWFGVLCVTGNVWGLQLEGMGLTGKLDLEPLAAIKNLRTLSFMNNKFNGSMPSVKNFGALKSLYLSNNRFTGEIPADAFDGMHHLKKLLLANNAFRGSIPSSLAYLPMLLELRLNGNQFHGEIPYFKQKDLKLASFENNDLEGPIPESLSNMDPVSFSGNKNLCGPPLSPCSSDSGSSPDLPSSPTEKNKNQSFFIIAIVLIVIGIILMIISLVVCILHTRRRKSLSAYPSAGQDRTEKYNYDQSTDKDKAADSVTSYTSRRGAVPDQNKLLFLQDDIQRFDLQDLLRASAEVLGSGSFGSSYKTGINSGQMLVVKRYKHMNNVGRDEFHEHMRRLGRLKHPNLLPIVAYYYRREEKLLIAEFMPNRSLASHLHANHSVDQPGLDWPTRLKIIQGVAKGLGYLFNELTTLTIPHGHLKSSNVVLDESFEPLLTDYALRPVMNSEQSHNLMISYKSPEYSLKGHLTKKTDVWCLGVLILELLTGRFPENYLSQGYDANMSLVTWVSNMVKEKKTGDVFDKEMTGKKNCKAEMLNLLKIGLSCCEEDEERRMEMRDAVEKIERLKEGEFDNDFASTTHNVFASRLIDDDDFGFAMNR.

A signal peptide spans 1–39 (MLTWETPVMLASNTASTKKLAFITTFLIIVLCPVTMVMS). 5 LRR repeats span residues 118-141 (IKNL…VKNF), 142-165 (GALK…AFDG), 167-191 (HHLK…AYLP), 193-217 (LLEL…DLKL), and 234-257 (SNMD…PCSS). Over residues 252-269 (LSPCSSDSGSSPDLPSSP) the composition is skewed to low complexity. Residues 252-271 (LSPCSSDSGSSPDLPSSPTE) are disordered. A helical transmembrane segment spans residues 278–298 (FFIIAIVLIVIGIILMIISLV). The disordered stretch occupies residues 311 to 344 (SAYPSAGQDRTEKYNYDQSTDKDKAADSVTSYTS). Residues 319 to 336 (DRTEKYNYDQSTDKDKAA) are compositionally biased toward basic and acidic residues. The Protein kinase domain occupies 372–646 (RASAEVLGSG…RDAVEKIERL (275 aa)). A Phosphoserine modification is found at Ser374. ATP is bound by residues 378-386 (LGSGSFGSS) and Lys400. Phosphoserine occurs at positions 452 and 455. At Thr472 the chain carries Phosphothreonine. Tyr542 carries the post-translational modification Phosphotyrosine.

Belongs to the protein kinase superfamily. Ser/Thr protein kinase family. Interacts in vitro with ROPGEF1 (via PRONE domain). Interacts weakly with the GRI peptide. As to expression, expressed in pollen and/or in flowers, but not in leaves.

The protein resides in the membrane. It catalyses the reaction L-seryl-[protein] + ATP = O-phospho-L-seryl-[protein] + ADP + H(+). The catalysed reaction is L-threonyl-[protein] + ATP = O-phospho-L-threonyl-[protein] + ADP + H(+). Functionally, receptor-like kinase involved in the control of pollen germination and pollen tube polar growth. Can phosphorylate ROPGEF1 in vitro. This is Pollen receptor-like kinase 4 from Arabidopsis thaliana (Mouse-ear cress).